We begin with the raw amino-acid sequence, 407 residues long: Arrestin domain-containing protein 2 (407 aa).

Belongs to the arrestin family. As to quaternary structure, interacts with WWP1 (via WW domains).

This chain is Arrestin domain-containing protein 2 (ARRDC2), found in Homo sapiens (Human).